The following is a 104-amino-acid chain: Gastrin (104 aa).

The first 21 residues, 1–21 (MQRLCVYVLILALALATFSEA), serve as a signal peptide directing secretion. A propeptide spanning residues 22 to 58 (SWKPRSRLQDAPSGPGANRGLEPHGLDQLGPASHHRR) is cleaved from the precursor. The segment at 22–70 (SWKPRSRLQDAPSGPGANRGLEPHGLDQLGPASHHRRQLGLQGPPQLVA) is disordered. Residues glutamine 59 and glutamine 76 each carry the pyrrolidone carboxylic acid modification. Sulfotyrosine is present on tyrosine 87. A Phenylalanine amide modification is found at phenylalanine 92. The residue at position 96 (serine 96) is a Phosphoserine. The propeptide occupies 96-104 (SAEEGDQRP).

Belongs to the gastrin/cholecystokinin family.

It localises to the secreted. Gastrin stimulates the stomach mucosa to produce and secrete hydrochloric acid and the pancreas to secrete its digestive enzymes. It also stimulates smooth muscle contraction and increases blood circulation and water secretion in the stomach and intestine. This Canis lupus familiaris (Dog) protein is Gastrin (GAST).